The primary structure comprises 175 residues: Large ribosomal subunit protein uL10 (175 aa).

It belongs to the universal ribosomal protein uL10 family. As to quaternary structure, part of the ribosomal stalk of the 50S ribosomal subunit. The N-terminus interacts with L11 and the large rRNA to form the base of the stalk. The C-terminus forms an elongated spine to which L12 dimers bind in a sequential fashion forming a multimeric L10(L12)X complex.

Forms part of the ribosomal stalk, playing a central role in the interaction of the ribosome with GTP-bound translation factors. This chain is Large ribosomal subunit protein uL10, found in Alkalilimnicola ehrlichii (strain ATCC BAA-1101 / DSM 17681 / MLHE-1).